Here is a 232-residue protein sequence, read N- to C-terminus: Ribonuclease P protein component 3 (232 aa).

This sequence belongs to the eukaryotic/archaeal RNase P protein component 3 family. In terms of assembly, consists of a catalytic RNA component and at least 4-5 protein subunits.

It is found in the cytoplasm. The catalysed reaction is Endonucleolytic cleavage of RNA, removing 5'-extranucleotides from tRNA precursor.. Part of ribonuclease P, a protein complex that generates mature tRNA molecules by cleaving their 5'-ends. The protein is Ribonuclease P protein component 3 of Halobacterium salinarum (strain ATCC 29341 / DSM 671 / R1).